Reading from the N-terminus, the 67-residue chain is SPbeta prophage-derived uncharacterized protein YopZ (67 aa).

The stretch at 1-40 (MTSEMQLQAQIDVIEKENKELRRRNEELGQTVECQNKQIV) forms a coiled coil. Residues 44–66 (WRLLFFASSWIVYGIVSAIKYLW) traverse the membrane as a helical segment.

The protein localises to the cell membrane. The sequence is that of SPbeta prophage-derived uncharacterized protein YopZ (yopZ) from Bacillus subtilis (strain 168).